The primary structure comprises 605 residues: Aspartate--tRNA(Asp/Asn) ligase (605 aa).

Residue Glu183 participates in L-aspartate binding. Residues 207-210 (QLFK) are aspartate. Residue Arg229 coordinates L-aspartate. ATP contacts are provided by residues 229-231 (RDE) and Gln238. Residue His457 participates in L-aspartate binding. Glu497 lines the ATP pocket. Arg504 contributes to the L-aspartate binding site. 549 to 552 (GLDR) is an ATP binding site.

Belongs to the class-II aminoacyl-tRNA synthetase family. Type 1 subfamily. Homodimer.

It localises to the cytoplasm. The catalysed reaction is tRNA(Asx) + L-aspartate + ATP = L-aspartyl-tRNA(Asx) + AMP + diphosphate. Its function is as follows. Aspartyl-tRNA synthetase with relaxed tRNA specificity since it is able to aspartylate not only its cognate tRNA(Asp) but also tRNA(Asn). Reaction proceeds in two steps: L-aspartate is first activated by ATP to form Asp-AMP and then transferred to the acceptor end of tRNA(Asp/Asn). In Persephonella marina (strain DSM 14350 / EX-H1), this protein is Aspartate--tRNA(Asp/Asn) ligase.